A 63-amino-acid chain; its full sequence is Large ribosomal subunit protein uL29 (63 aa).

The protein belongs to the universal ribosomal protein uL29 family.

The protein is Large ribosomal subunit protein uL29 of Aliarcobacter butzleri (strain RM4018) (Arcobacter butzleri).